The chain runs to 265 residues: MARGLKKHLKRLNAPKHWMLDKLGGAFAPKPSSGPHKSRECLPLILIIRNRLKYALTYREVISILMQRHVLVDGKVRTDKTYPAGFMDVISIPKTGENYRLLYDTKGRFRLQSVKDEDAKFKLCKVRSVQFGQKGIPYLNTYDGRTIRYPDPIIKANDTIKIDLETNKIVDFIKFDVGNVVMVTGGRNTGRVGVIKNREKHKGSFETIHVEDALGHQFATRLGNVFTIGKGNKPWVSLPKGKGIKLSIIEEQRKRDAAAQAAANA.

One can recognise an S4 RNA-binding domain in the interval 42-104; sequence LPLILIIRNR…TGENYRLLYD (63 aa).

It belongs to the eukaryotic ribosomal protein eS4 family.

The protein resides in the cytoplasm. This chain is Small ribosomal subunit protein eS4 (RPS4), found in Oryza sativa subsp. japonica (Rice).